A 332-amino-acid chain; its full sequence is MPMTMTQSATNPTATPVSANKASANAATTQDPSIFGKVAVVFGGNSNERAVSLDSGNAVLQALQSQGIDATHFDPKDQDVTELKNYDRVFNVLHGRGGEDGQLQGLLDWLGLPQTGSGVLASAIGMDKVRTKQLWHGCGLSTAPFAVLGADTDWQQIVNTLGLPLIVKPVHEGSSIGMSKVNTLDELPKAYEVAAGCGDVVMAEKWITGREFTIVIIDDEAYPVIRLQPADISNFYDYEAKYNRNDTQYHIPCGLSAEEEAHLQALSLAAFKAVDAKGWGRIDAMQDEEGNFWLLEINTVPGMTSHSLVPMAAKARGMNFEQLCWHILAQTL.

Residues 1–17 are compositionally biased toward polar residues; sequence MPMTMTQSATNPTATPV. The disordered stretch occupies residues 1-28; it reads MPMTMTQSATNPTATPVSANKASANAAT. A compositionally biased stretch (low complexity) spans 18 to 28; it reads SANKASANAAT. One can recognise an ATP-grasp domain in the interval 132–329; that stretch reads KQLWHGCGLS…FEQLCWHILA (198 aa). 158–213 contributes to the ATP binding site; that stretch reads VNTLGLPLIVKPVHEGSSIGMSKVNTLDELPKAYEVAAGCGDVVMAEKWITGREFT. Positions 283, 296, and 298 each coordinate Mg(2+).

It belongs to the D-alanine--D-alanine ligase family. Mg(2+) serves as cofactor. It depends on Mn(2+) as a cofactor.

It is found in the cytoplasm. It carries out the reaction 2 D-alanine + ATP = D-alanyl-D-alanine + ADP + phosphate + H(+). It functions in the pathway cell wall biogenesis; peptidoglycan biosynthesis. Functionally, cell wall formation. The protein is D-alanine--D-alanine ligase of Psychrobacter sp. (strain PRwf-1).